The sequence spans 78 residues: Large ribosomal subunit protein uL29 (78 aa).

The protein belongs to the universal ribosomal protein uL29 family.

This is Large ribosomal subunit protein uL29 from Crocosphaera subtropica (strain ATCC 51142 / BH68) (Cyanothece sp. (strain ATCC 51142)).